The chain runs to 546 residues: 2-isopropylmalate synthase (546 aa).

In terms of domain architecture, Pyruvate carboxyltransferase spans 8 to 271 (ILIFDTTLRD…NSFFKRNPDS (264 aa)). Residues Asp17, His208, His210, and Asn244 each contribute to the Mn(2+) site. A regulatory domain region spans residues 408–546 (QLCLVQVSCG…NKTFLSNPAN (139 aa)).

It belongs to the alpha-IPM synthase/homocitrate synthase family. LeuA type 1 subfamily. In terms of assembly, homodimer. Mn(2+) is required as a cofactor.

The protein resides in the cytoplasm. It catalyses the reaction 3-methyl-2-oxobutanoate + acetyl-CoA + H2O = (2S)-2-isopropylmalate + CoA + H(+). Its pathway is amino-acid biosynthesis; L-leucine biosynthesis; L-leucine from 3-methyl-2-oxobutanoate: step 1/4. Its function is as follows. Catalyzes the condensation of the acetyl group of acetyl-CoA with 3-methyl-2-oxobutanoate (2-ketoisovalerate) to form 3-carboxy-3-hydroxy-4-methylpentanoate (2-isopropylmalate). The protein is 2-isopropylmalate synthase of Prochlorococcus marinus (strain MIT 9312).